Here is a 240-residue protein sequence, read N- to C-terminus: tRNA (guanine-N(1)-)-methyltransferase (240 aa).

S-adenosyl-L-methionine is bound by residues glycine 112 and 132–137 (LGDFVL).

Belongs to the RNA methyltransferase TrmD family. In terms of assembly, homodimer.

It localises to the cytoplasm. It catalyses the reaction guanosine(37) in tRNA + S-adenosyl-L-methionine = N(1)-methylguanosine(37) in tRNA + S-adenosyl-L-homocysteine + H(+). In terms of biological role, specifically methylates guanosine-37 in various tRNAs. The chain is tRNA (guanine-N(1)-)-methyltransferase from Cyanothece sp. (strain PCC 7425 / ATCC 29141).